A 198-amino-acid polypeptide reads, in one-letter code: Protein GrpE (198 aa).

The interval 1–58 is disordered; the sequence is MTEKDQSVNNEEFAEKEDNTAKDSNTDEQIEKTASEDDVQNDSSAVDDKEKEIQQLKE. Basic and acidic residues-rich tracts occupy residues 16 to 35 and 46 to 58; these read KEDN…KTAS and VDDK…QLKE.

The protein belongs to the GrpE family. As to quaternary structure, homodimer.

It localises to the cytoplasm. Functionally, participates actively in the response to hyperosmotic and heat shock by preventing the aggregation of stress-denatured proteins, in association with DnaK and GrpE. It is the nucleotide exchange factor for DnaK and may function as a thermosensor. Unfolded proteins bind initially to DnaJ; upon interaction with the DnaJ-bound protein, DnaK hydrolyzes its bound ATP, resulting in the formation of a stable complex. GrpE releases ADP from DnaK; ATP binding to DnaK triggers the release of the substrate protein, thus completing the reaction cycle. Several rounds of ATP-dependent interactions between DnaJ, DnaK and GrpE are required for fully efficient folding. This chain is Protein GrpE, found in Staphylococcus carnosus (strain TM300).